A 249-amino-acid chain; its full sequence is Phosphonates import ATP-binding protein PhnC (249 aa).

One can recognise an ABC transporter domain in the interval 2–246 (IEFKKVEKVW…KLNESKLEEI (245 aa)). 35–42 (GLSGAGKT) is an ATP binding site.

This sequence belongs to the ABC transporter superfamily. Phosphonates importer (TC 3.A.1.9.1) family. The complex is composed of two ATP-binding proteins (PhnC), two transmembrane proteins (PhnE) and a solute-binding protein (PhnD).

It is found in the cell membrane. The enzyme catalyses phosphonate(out) + ATP + H2O = phosphonate(in) + ADP + phosphate + H(+). Functionally, part of the ABC transporter complex PhnCDE involved in phosphonates import. Responsible for energy coupling to the transport system. This chain is Phosphonates import ATP-binding protein PhnC, found in Mesoplasma florum (strain ATCC 33453 / NBRC 100688 / NCTC 11704 / L1) (Acholeplasma florum).